Here is a 63-residue protein sequence, read N- to C-terminus: Alpha-conotoxin-like Sm1.3 (63 aa).

The N-terminal stretch at 1-16 (MFTVFLLVVLATTVVS) is a signal peptide. A propeptide spanning residues 17-43 (SPSDRASDGRNAAANEKASDVIALALK) is cleaved from the precursor. 2 disulfides stabilise this stretch: Cys45–Cys51 and Cys46–Cys59. Position 58 is a methionine sulfoxide; partial (Met58). Position 59 is a cysteine amide; partial (Cys59).

The protein belongs to the conotoxin A superfamily. Expressed by the venom duct.

It localises to the secreted. Its function is as follows. Alpha-conotoxins act on postsynaptic membranes, they bind to the nicotinic acetylcholine receptors (nAChR) and thus inhibit them. This chain is Alpha-conotoxin-like Sm1.3, found in Conus stercusmuscarum (Fly-specked cone).